A 124-amino-acid polypeptide reads, in one-letter code: MSLPTDRKYTESHEWVQAEGDVFVVGITDNAQEQLGDLVFVGDVKVGATLKAGETAGVVESVKAASDIYAPVDGEIVAFNDELEANPSLINESAYTAWIFKIKPANAADLDKLLDAAGYQAVAG.

In terms of domain architecture, Lipoyl-binding spans 22–103; it reads VFVVGITDNA…AYTAWIFKIK (82 aa). The residue at position 63 (Lys-63) is an N6-lipoyllysine.

This sequence belongs to the GcvH family. In terms of assembly, the glycine cleavage system is composed of four proteins: P, T, L and H. (R)-lipoate serves as cofactor.

The glycine cleavage system catalyzes the degradation of glycine. The H protein shuttles the methylamine group of glycine from the P protein to the T protein. This chain is Glycine cleavage system H protein, found in Bordetella pertussis (strain Tohama I / ATCC BAA-589 / NCTC 13251).